We begin with the raw amino-acid sequence, 525 residues long: Probable histidine ammonia-lyase (525 aa).

The segment at residues 145–147 (ASG) is a cross-link (5-imidazolinone (Ala-Gly)). 2,3-didehydroalanine (Ser) is present on serine 146.

Belongs to the PAL/histidase family. Contains an active site 4-methylidene-imidazol-5-one (MIO), which is formed autocatalytically by cyclization and dehydration of residues Ala-Ser-Gly.

The protein resides in the cytoplasm. The catalysed reaction is L-histidine = trans-urocanate + NH4(+). Its pathway is amino-acid degradation; L-histidine degradation into L-glutamate; N-formimidoyl-L-glutamate from L-histidine: step 1/3. This is Probable histidine ammonia-lyase from Halobacterium salinarum (strain ATCC 29341 / DSM 671 / R1).